The following is a 411-amino-acid chain: Snake venom metalloproteinase ACLF (411 aa).

An N-terminal signal peptide occupies residues 1–20 (MIQVLLVTLCLAAFPYQGSS). A propeptide spanning residues 21–189 (IILESGNVND…KKAFQLNLTP (169 aa)) is cleaved from the precursor. Positions 197 to 393 (RYVELVIVAD…NNPQCILNKP (197 aa)) constitute a Peptidase M12B domain. E200 and D284 together coordinate Ca(2+). Disulfide bonds link C308–C388, C348–C372, and C350–C355. H333 is a binding site for Zn(2+). The active site involves E334. Residues H337 and H343 each coordinate Zn(2+). Ca(2+)-binding residues include C388, N391, V403, N406, L408, and E410.

It belongs to the venom metalloproteinase (M12B) family. P-I subfamily. As to quaternary structure, monomer. It depends on Zn(2+) as a cofactor. As to expression, expressed by the venom gland.

The protein resides in the secreted. Its activity is regulated as follows. Inhibited by EDTA and 1,10-phenanthroline, but not by PMSF. Its function is as follows. Snake venom zinc metalloprotease that has fibrinolytic activity. The recombinant enzyme cleaves both alpha- and beta-chains of fibrinogen, but not the gamma-chain. The recombinant protein does not produce hemorrhage in mice. Cleaves the peptide substrate Abz-LVEALYQ-EDDnp at the Ala-Leu bond in vitro. This chain is Snake venom metalloproteinase ACLF (ACLPREF), found in Agkistrodon contortrix laticinctus (Broad-banded copperhead).